We begin with the raw amino-acid sequence, 446 residues long: StAR-related lipid transfer protein 3 (446 aa).

Residues 1 to 52 are Cytoplasmic-facing; it reads MSKRPGDLACDLERSLPALASLGTSLSHSQSLSSHFIPPPLEKRRAISDVRR. Residues 47–218 form the MENTAL domain; it reads ISDVRRTFCL…YSPPESFAGS (172 aa). A helical transmembrane segment spans residues 53-73; sequence TFCLFVTFDLLFISLLWIIEL. Residues 74 to 95 lie on the Extracellular side of the membrane; the sequence is NTNTGIRKNLEQEVIHYSFQSS. A helical transmembrane segment spans residues 96-116; that stretch reads FFDIFVLAFFRFSGLLLGYAV. Over 117–121 the chain is Cytoplasmic; the sequence is LRLQH. The helical transmembrane segment at 122 to 142 threads the bilayer; that stretch reads WWVIAVTTLVSSAFLIVKVIL. Residues 143–149 are Extracellular-facing; it reads SELLSKG. A helical transmembrane segment spans residues 150–170; the sequence is AFGYLLPIVSFVLAWLETWFL. Residues 171–446 are Cytoplasmic-facing; that stretch reads DFKVLPQEAE…QRVGELGARA (276 aa). The FFAT motif lies at 207-213; the sequence is QFYSPPE. Ser210, Ser218, and Ser222 each carry phosphoserine. The START domain maps to 231-444; the sequence is SFSAQEREYI…LRQRVGELGA (214 aa).

The protein belongs to the STARD3 family. In terms of assembly, homodimer. Interacts (via the MENTAL domain) with STARD3NL. Interacts (via phosphorylated FFAT motif) with VAPA (via MSP domain). Interacts (via phosphorylated FFAT motif) with VAPB (via MSP domain). Interacts (via phosphorylated FFAT motif) with MOSPD2 (via MSP domain); this interaction allows enrichment of MOSPD2 around endosomes. Phosphorylation at Ser-210 is necessary and sufficient for the direct interaction of the phosphorylated FFAT motif with the MSP domain of MOSPD2, VAPA and VAPB and allows the tethering of two membranes that participates in the formation of ER-endosome contacts. Phosphorylation of the FFAT motif leads to conformation changes. Additional phosphorylations around the core FFAT motif (QFYSPPE) are not essential but strengthen the interaction with MOSPD2, VAPA and VAPB. Phosphorylation at Ser-210 of FFAT motif drives membrane tethering between the endoplasmic reticulum and late endosomes via interaction with VAPA and VAPB that in turn allows the efficient transport of sterol mediated by the START domain.

Its subcellular location is the late endosome membrane. It carries out the reaction cholesterol(in) = cholesterol(out). In terms of biological role, sterol-binding protein that mediates cholesterol transport from the endoplasmic reticulum to endosomes. The sterol transport mechanism is triggered by phosphorylation of FFAT motif that leads to membrane tethering between the endoplasmic reticulum and late endosomes via interaction with VAPA and VAPB. Acts as a lipid transfer protein that redirects sterol to the endosome at the expense of the cell membrane and favors membrane formation inside endosomes. May also mediate cholesterol transport between other membranes, such as mitochondria membrane or cell membrane. However, such results need additional experimental evidences; probably mainly mediates cholesterol transport from the endoplasmic reticulum to endosomes. Does not activate transcriptional cholesterol sensing. Able to bind other lipids, such as lutein, a xanthophyll carotenoids that form the macular pigment of the retina. The sequence is that of StAR-related lipid transfer protein 3 from Mus musculus (Mouse).